The primary structure comprises 85 residues: Putative defensin-like protein 142 (85 aa).

The signal sequence occupies residues Met1 to Pro24. 4 disulfide bridges follow: Cys30-Cys78, Cys41-Cys63, Cys46-Cys73, and Cys50-Cys75.

The protein belongs to the DEFL family.

It is found in the secreted. This chain is Putative defensin-like protein 142 (LCR34), found in Arabidopsis thaliana (Mouse-ear cress).